We begin with the raw amino-acid sequence, 385 residues long: Aryl-alcohol dehydrogenase [NADP(+)] (385 aa).

Tyrosine 76 serves as the catalytic Proton donor. Residue 238 to 248 (NVLCAGKIRTD) coordinates NADP(+).

This sequence belongs to the aldo/keto reductase family. Aldo/keto reductase 2 subfamily. In terms of processing, the N-terminus is blocked.

The catalysed reaction is an aromatic primary alcohol + NADP(+) = an aromatic aldehyde + NADPH + H(+). The sequence is that of Aryl-alcohol dehydrogenase [NADP(+)] from Phanerodontia chrysosporium (White-rot fungus).